We begin with the raw amino-acid sequence, 223 residues long: Protein disulfide-isomerase-like protein EhSep2 (223 aa).

Positions 1-17 (MALRSLTLLCAAAGASA) are cleaved as a signal peptide. Positions 18–125 (GAIELTPDNF…DELKKFAENE (108 aa)) constitute a Thioredoxin domain. Residue Sec-47 is a non-standard amino acid, selenocysteine. The stretch at 155-201 (EKRTEMLETLKKELADAESTHEALLKELQATYKESMDKLEKLKEESA) forms a coiled coil. Residues 201-223 (APKIKLLKAATPAPKAEGAKDEV) form a disordered region. The segment covering 203-216 (KIKLLKAATPAPKA) has biased composition (low complexity). The short motif at 220–223 (KDEV) is the Prevents secretion from ER element.

Belongs to the protein disulfide isomerase family.

It localises to the endoplasmic reticulum lumen. The sequence is that of Protein disulfide-isomerase-like protein EhSep2 (SEP2) from Emiliania huxleyi (Coccolithophore).